Here is a 369-residue protein sequence, read N- to C-terminus: MLAKKQIQGLPPYAPGKPIEDVKREYGLETVIKMASNENPYGASPAVAKAIADGASKTFLYPDGYGTALRKALAAKHKVDEGQLILGNGTDEVIQLLCRSFLTPETNTVMATPSFSQYKLNATIEGATIKEITVKEDGSHDLDAMLAAIDDQTRIVWVCNPNNPNGVALGEAELKTFLDAVPTTCLVVVDEAYYEYVELDDFPNSVALLNAYPQLVVLRTFSKAYGLAGLRVGYGISQREIARQIEPVRLPFNNNILAHTAALAALEDEAFIAACKQKNSVEKAKLRAFFEARGMFVFPSETNFLLVETGIPGDVVFQAFLENGFILRSGEALGYPTAIRISIGNEAENDAFIEKAPEILDQLRASLGA.

An N6-(pyridoxal phosphate)lysine modification is found at K223.

The protein belongs to the class-II pyridoxal-phosphate-dependent aminotransferase family. Histidinol-phosphate aminotransferase subfamily. Homodimer. Pyridoxal 5'-phosphate is required as a cofactor.

The catalysed reaction is L-histidinol phosphate + 2-oxoglutarate = 3-(imidazol-4-yl)-2-oxopropyl phosphate + L-glutamate. Its pathway is amino-acid biosynthesis; L-histidine biosynthesis; L-histidine from 5-phospho-alpha-D-ribose 1-diphosphate: step 7/9. The protein is Histidinol-phosphate aminotransferase of Shouchella clausii (strain KSM-K16) (Alkalihalobacillus clausii).